Here is a 315-residue protein sequence, read N- to C-terminus: Spermidine synthase 1 (315 aa).

Residues 25-262 (PGWFSEISPL…GMIGFMLCST (238 aa)) form the PABS domain. Gln56 is a binding site for S-adenosyl 3-(methylsulfanyl)propylamine. Tyr86 lines the putrescine pocket. S-adenosyl 3-(methylsulfanyl)propylamine-binding positions include Gln87, Asp111, Glu131, 162-163 (DG), and Asp181. Asp181 serves as the catalytic Proton acceptor. Residues 181–184 (DSSD) and Tyr250 contribute to the putrescine site.

It belongs to the spermidine/spermine synthase family.

It carries out the reaction S-adenosyl 3-(methylsulfanyl)propylamine + putrescine = S-methyl-5'-thioadenosine + spermidine + H(+). Its pathway is amine and polyamine biosynthesis; spermidine biosynthesis; spermidine from putrescine: step 1/1. This is Spermidine synthase 1 from Hyoscyamus niger (Black henbane).